The primary structure comprises 493 residues: Cysteine sulfinic acid decarboxylase (493 aa).

Lysine 305 carries the post-translational modification N6-(pyridoxal phosphate)lysine.

Belongs to the group II decarboxylase family. In terms of assembly, homodimer. Requires pyridoxal 5'-phosphate as cofactor. In terms of tissue distribution, expressed in brain, liver and kidney.

It catalyses the reaction L-aspartate + H(+) = beta-alanine + CO2. The catalysed reaction is 3-sulfino-L-alanine + H(+) = hypotaurine + CO2. The enzyme catalyses L-cysteate + H(+) = taurine + CO2. It functions in the pathway organosulfur biosynthesis; taurine biosynthesis; hypotaurine from L-cysteine: step 2/2. Catalyzes the decarboxylation of L-aspartate, 3-sulfino-L-alanine (cysteine sulfinic acid), and L-cysteate to beta-alanine, hypotaurine and taurine, respectively. The preferred substrate is 3-sulfino-L-alanine. Does not exhibit any decarboxylation activity toward glutamate. The polypeptide is Cysteine sulfinic acid decarboxylase (Csad) (Rattus norvegicus (Rat)).